Consider the following 427-residue polypeptide: MLDLKQIRENPDYIQELLNRRSASNEYDLTPILDRDRQQRDIEATRTQLQARSNEIGKLIGQKMKSGINPQSEEIQALKTEGNDLKTQLSELEPQEKQLKSEIEALLLQLPNLPSESTPLGKSEADNVEVRRWGDEYLPKIEVLPHWEIAERLGILEVERAVKIAQSRFIALVGAGAALERALINFMLDCQINAGYLEVIPPVLINSDSLQGTGQLPKFAEESFKCSEDDLWLAPTAEVPVTNLYRDEIVEAEQLPIKHCAYTPCFRREAGSYGKDTRGLIRLHQFNKVELVKLVHPETSEAEHQSLVNNAEAILQALKLPYRVLELCTGDLGFGATKCYDLEVWLPSSGTYREISSCSNCGDFQARRANIRLKEKGKKGTQYVHTLNGSGLAVGRTMAAILENYQQSNGTVKVPDVLQPYLKREIL.

Residue 236–238 (TAE) participates in L-serine binding. 267-269 (RRE) lines the ATP pocket. Glu-290 serves as a coordination point for L-serine. 354–357 (EISS) lines the ATP pocket. Ser-390 contributes to the L-serine binding site.

It belongs to the class-II aminoacyl-tRNA synthetase family. Type-1 seryl-tRNA synthetase subfamily. In terms of assembly, homodimer. The tRNA molecule binds across the dimer.

It localises to the cytoplasm. It catalyses the reaction tRNA(Ser) + L-serine + ATP = L-seryl-tRNA(Ser) + AMP + diphosphate + H(+). The catalysed reaction is tRNA(Sec) + L-serine + ATP = L-seryl-tRNA(Sec) + AMP + diphosphate + H(+). It participates in aminoacyl-tRNA biosynthesis; selenocysteinyl-tRNA(Sec) biosynthesis; L-seryl-tRNA(Sec) from L-serine and tRNA(Sec): step 1/1. Functionally, catalyzes the attachment of serine to tRNA(Ser). Is also able to aminoacylate tRNA(Sec) with serine, to form the misacylated tRNA L-seryl-tRNA(Sec), which will be further converted into selenocysteinyl-tRNA(Sec). This chain is Serine--tRNA ligase, found in Rippkaea orientalis (strain PCC 8801 / RF-1) (Cyanothece sp. (strain PCC 8801)).